The sequence spans 69 residues: Small integral membrane protein 20 (69 aa).

Topologically, residues 1–8 are mitochondrial matrix; the sequence is MAAARNLR. Residues 9–29 form a helical membrane-spanning segment; that stretch reads TALIFGGFISMVGAAFYPIYF. Over 30–69 the chain is Mitochondrial intermembrane; it reads RPLLRLEEYQKEQAVNRAGIVQEDVQPPGLKVWSDPFGRK. F66 is subject to Phenylalanine amide.

In terms of assembly, component of the MITRAC (mitochondrial translation regulation assembly intermediate of cytochrome c oxidase complex) complex, the core components of this complex being Coa3/Mitrac12 and Cox14. Interacts with Coa3/Mitrac12 and Cox4i1. Directly interacts with newly synthesized Mt-Co1/Cox1. Highly expressed in the hypothalamus, substantia nigra reticulata, Edinger-Westphal nucleus, and nucleus of the solitary tract/dorsal motor nucleus of the vagus, the spinal cord, and sensory ganglia (at protein level). Also expressed in the heart, thymus, esophagus, stomach, spleen, lung, pituitary gland, kidney, jejunum, duodenum, ileum, cerebrum, pons, and colon (at protein level). Expressed in preadipocytes and apidocytes (at protein level). Expressed in pancreatic islet cells (at protein level).

It is found in the mitochondrion inner membrane. It localises to the secreted. Its function is as follows. Component of the MITRAC (mitochondrial translation regulation assembly intermediate of cytochrome c oxidase complex) complex, that regulates cytochrome c oxidase assembly. Promotes the progression of complex assembly after the association of Mt-Co1/Cox11 with Cox4I1 and Cox6c. Chaperone-like assembly factor required to stabilize newly synthesized Mt-Co1/Cox1 and to prevent its premature turnover. Functionally, peptide involved in a broad spectrum of regulatory functions. Is a ligand for GPR173. As part of the reproductive cycle, it regulates gonadotropin-releasing hormone (GnRH) signaling in the hypothalamus and pituitary gland which augments the release of luteinizing hormone. More specifically, it regulates the expression of transcription factors CEBPB and POU2F1/OCT1 through the cAMP-PKA signaling pathway, which subsequently regulate the expression of GNRHR and KISS1. Plays a protective role in memory retention through activation of GNRHR. Regulates the secretion of AVP by hypothalamic neurons. Plays a role in the transduction of the itch sensation. Induces anxiolytic effects, reducing behavior associated with anxiety. Regulates food intake as well as satiation and satiety by increasing NUCB2 expression in neurons. In the ovary, it regulates follicular growth by stimulating granulosa cell proliferation by increasing the expression of GPR173, CREB1, CYP19A1, KITLG, FSHR, and LHCGR. It also increases the production of estradiol (E2). In the heart, it regulates contractility and relaxation by activating the AKT1-NOS3 and MAPK1-MAPK3 signaling pathways. It also plays a cardioprotective role during ischemia, where it activates the SAFE and RISK pathways. Stimulates the proliferation and differentiation of preadipocytes. In pancreatic islet cells, it induces proliferation of islet cells as well as the production of INS1 and INS2 through activation of the MAPK1-MAPK3 signaling pathways. The protein is Small integral membrane protein 20 of Rattus norvegicus (Rat).